The primary structure comprises 705 residues: Translation initiation factor IF-2 (705 aa).

Positions 40–124 (DDQIKALDKK…QPAAPKEIPS (85 aa)) are disordered. Basic and acidic residues predominate over residues 41–58 (DQIKALDKKFKKEQKNDN). The span at 59 to 77 (KQSTQNNHQKSNNQNQNKG) shows a compositional bias: low complexity. Residues 94-108 (KGNKKNNRNNKKNNK) are compositionally biased toward basic residues. One can recognise a tr-type G domain in the interval 207–376 (ERPAVVTIMG…GLVAEVQELK (170 aa)). Residues 216 to 223 (GHVDHGKT) form a G1 region. A GTP-binding site is contributed by 216 to 223 (GHVDHGKT). The tract at residues 241–245 (GITQH) is G2. The interval 262–265 (DTPG) is G3. Residues 262–266 (DTPGH) and 316–319 (NKID) contribute to the GTP site. The G4 stretch occupies residues 316–319 (NKID). The tract at residues 352 to 354 (SAL) is G5.

The protein belongs to the TRAFAC class translation factor GTPase superfamily. Classic translation factor GTPase family. IF-2 subfamily.

The protein localises to the cytoplasm. Its function is as follows. One of the essential components for the initiation of protein synthesis. Protects formylmethionyl-tRNA from spontaneous hydrolysis and promotes its binding to the 30S ribosomal subunits. Also involved in the hydrolysis of GTP during the formation of the 70S ribosomal complex. The chain is Translation initiation factor IF-2 from Staphylococcus aureus (strain MSSA476).